Consider the following 367-residue polypeptide: UDP-N-acetylglucosamine--N-acetylmuramyl-(pentapeptide) pyrophosphoryl-undecaprenol N-acetylglucosamine transferase (367 aa).

Residues 15–17 (TGG), N126, R169, S197, and Q298 each bind UDP-N-acetyl-alpha-D-glucosamine.

This sequence belongs to the glycosyltransferase 28 family. MurG subfamily.

It localises to the cell inner membrane. The catalysed reaction is di-trans,octa-cis-undecaprenyl diphospho-N-acetyl-alpha-D-muramoyl-L-alanyl-D-glutamyl-meso-2,6-diaminopimeloyl-D-alanyl-D-alanine + UDP-N-acetyl-alpha-D-glucosamine = di-trans,octa-cis-undecaprenyl diphospho-[N-acetyl-alpha-D-glucosaminyl-(1-&gt;4)]-N-acetyl-alpha-D-muramoyl-L-alanyl-D-glutamyl-meso-2,6-diaminopimeloyl-D-alanyl-D-alanine + UDP + H(+). It functions in the pathway cell wall biogenesis; peptidoglycan biosynthesis. Cell wall formation. Catalyzes the transfer of a GlcNAc subunit on undecaprenyl-pyrophosphoryl-MurNAc-pentapeptide (lipid intermediate I) to form undecaprenyl-pyrophosphoryl-MurNAc-(pentapeptide)GlcNAc (lipid intermediate II). This chain is UDP-N-acetylglucosamine--N-acetylmuramyl-(pentapeptide) pyrophosphoryl-undecaprenol N-acetylglucosamine transferase, found in Bradyrhizobium sp. (strain BTAi1 / ATCC BAA-1182).